Here is a 137-residue protein sequence, read N- to C-terminus: Peptide methionine sulfoxide reductase MsrB (137 aa).

Residues 7 to 129 (AEELKKNLSD…NSASLRFTDG (123 aa)) enclose the MsrB domain. Zn(2+) is bound by residues cysteine 46, cysteine 49, cysteine 95, and cysteine 98. Catalysis depends on cysteine 118, which acts as the Nucleophile.

It belongs to the MsrB Met sulfoxide reductase family. The cofactor is Zn(2+).

It carries out the reaction L-methionyl-[protein] + [thioredoxin]-disulfide + H2O = L-methionyl-(R)-S-oxide-[protein] + [thioredoxin]-dithiol. This Shigella dysenteriae serotype 1 (strain Sd197) protein is Peptide methionine sulfoxide reductase MsrB.